Here is a 439-residue protein sequence, read N- to C-terminus: MARLGFGLVSCTFFLAASGLYSSSDDVIELTPSNFNREVIQSNSLWLVEFYAPWCGHCQRLTPEWKKAATALKDVVKVGAVDADKHQSLGGQYGVQGFPTIKIFGANKNKPEDYQGGRTGEAIVDAALSALRQLVKDRLSGRSGGYSSGKQGRGDSSSKKDVIELTDDTFDKNVLDSDDVWMVEFYAPWCGHCKNLEPEWATAATEVKEQTKGKVKLAAVDATVNQVLANRYGIRGFPTIKIFQKGEAPVDYDGGRTRSDIVSRALDLFSDNAPPPELLEIINEDVAKKMCEEHQLCVVAVLPHILDTGAARNSYLEILLKLADKYKKKMWGWLWTEAGAQSELENALGIGGFGYPAMARINARKMKFALLKGSFSEQGINEFLRELSFGRASTAPVGGGSFPAITAREPWDGRDGELPVEDDIDLSDVELDDLEKDEL.

A signal peptide spans 1-19; that stretch reads MARLGFGLVSCTFFLAASG. 2 Thioredoxin domains span residues 20–133 and 151–287; these read LYSS…ALRQ and QGRG…EDVA. Residues Cys55 and Cys58 each act as nucleophile in the active site. Cys55 and Cys58 are joined by a disulfide. A phosphoserine mark is found at Ser129, Ser156, and Ser158. Residues 141 to 160 form a disordered region; sequence GRSGGYSSGKQGRGDSSSKK. Active-site nucleophile residues include Cys190 and Cys193. Cys190 and Cys193 are joined by a disulfide. Residues 400–425 are disordered; that stretch reads GSFPAITAREPWDGRDGELPVEDDID. Ser427 carries the phosphoserine modification. The Prevents secretion from ER signature appears at 436 to 439; sequence KDEL.

This sequence belongs to the protein disulfide isomerase family. Part of a large chaperone multiprotein complex comprising DNAJB11, HSP90B1, HSPA5, HYOU, PDIA2, PDIA4, PDIA6, PPIB, SDF2L1, UGGT1 and very small amounts of ERP29, but not, or at very low levels, CALR nor CANX. Interacts with MICA on the surface of tumor cells, leading to MICA disulfide bond reduction which is required for its release from tumor cells. Interacts with ITGB3 following platelet stimulation. Interacts with ERN1; the interaction is direct. Interacts with EIF2AK3. As to expression, expressed most abundantly in lung and kidney, followed by heart, liver and brain.

It localises to the endoplasmic reticulum lumen. The protein resides in the cell membrane. It is found in the melanosome. It carries out the reaction Catalyzes the rearrangement of -S-S- bonds in proteins.. Its function is as follows. May function as a chaperone that inhibits aggregation of misfolded proteins. Negatively regulates the unfolded protein response (UPR) through binding to UPR sensors such as ERN1, which in turn inactivates ERN1 signaling. May also regulate the UPR via the EIF2AK3 UPR sensor. Plays a role in platelet aggregation and activation by agonists such as convulxin, collagen and thrombin. In Mesocricetus auratus (Golden hamster), this protein is Protein disulfide-isomerase A6 (PDIA6).